Here is a 31-residue protein sequence, read N- to C-terminus: Photosystem II reaction center protein T (31 aa).

A helical membrane pass occupies residues 3–23 (AFSYVLILTLALVTLFFAVAF).

The protein belongs to the PsbT family. In terms of assembly, PSII is composed of 1 copy each of membrane proteins PsbA, PsbB, PsbC, PsbD, PsbE, PsbF, PsbH, PsbI, PsbJ, PsbK, PsbL, PsbM, PsbT, PsbX, PsbY, Psb30/Ycf12, peripheral proteins PsbO, CyanoQ (PsbQ), PsbU, PsbV and a large number of cofactors. It forms dimeric complexes.

The protein localises to the cellular thylakoid membrane. Functionally, found at the monomer-monomer interface of the photosystem II (PS II) dimer, plays a role in assembly and dimerization of PSII. PSII is a light-driven water plastoquinone oxidoreductase, using light energy to abstract electrons from H(2)O, generating a proton gradient subsequently used for ATP formation. This Prochlorococcus marinus (strain NATL2A) protein is Photosystem II reaction center protein T.